Consider the following 581-residue polypeptide: Major facilitator superfamily multidrug transporter NAG4 (581 aa).

Polar residues predominate over residues 1 to 14 (MSHATDSTLDNASV). Positions 1–43 (MSHATDSTLDNASVDSEKVRDFGDDLQNHPVQPTRSILSKIRS) are disordered. N-linked (GlcNAc...) asparagine glycosylation occurs at asparagine 11. Residues 15–27 (DSEKVRDFGDDLQ) show a composition bias toward basic and acidic residues. An N-linked (GlcNAc...) asparagine glycan is attached at asparagine 125. The next 12 helical transmembrane spans lie at 132-152 (WLYTLVLGAVCFVVALGSAIV), 169-189 (VIILASVTVFVIGFGVGPLVF), 199-219 (KPIYVVTLFIAVVFIVPCGAA), 230-250 (LIDGIAFSAPMTLIGGSLADI), 261-281 (AIFSAAPFLGPVCGPIFGGLL), 290-310 (WIYWTFLIVAGVFYAIFIAIV), 365-385 (IVFLMTIYMAICYGLLYMFFF), 403-423 (GVMFIPIGVGVIIATIAAPFF), 447-467 (LIPMMIACWFVPVGLFAFAWS), 471-491 (WVSWAGPCFSGLAAGFGFCCL), 510-530 (ALAAKTFVRSIWGACVPLFTI), and 544-564 (LMAFISLACCAIPYLFFFFGA).

The protein belongs to the major facilitator superfamily. DHA1 family. Polyamines/proton antiporter (TC 2.A.1.2.16) subfamily.

It localises to the cell membrane. Its function is as follows. MFS transporter involved in N-acetylglucosamine (GlcNAc) uptake. Confers resistance to cycloheximide, 4-nitroquinoline-N-oxide, and 1,10-phenanthroline, and contributes to virulence. The sequence is that of Major facilitator superfamily multidrug transporter NAG4 from Candida albicans (strain SC5314 / ATCC MYA-2876) (Yeast).